The primary structure comprises 912 residues: Coatomer subunit beta (912 aa).

HEAT repeat units follow at residues 59–96, 100–135, 136–172, 244–281, 300–337, 339–375, 397–434, 441–479, 550–575, and 576–612; these read PIPQ…THLG, SEMI…REAE, VLEP…HFDY, SERS…APTA, NVKM…PNID, CKKV…KEFD, EVLG…TYPS, KKLI…AMTS, LKAQ…TSKS, and AYER…YLKY.

As to quaternary structure, oligomeric complex that consists of at least the alpha, beta, beta', gamma, delta, epsilon and zeta subunits.

The protein resides in the cytoplasm. It localises to the golgi apparatus membrane. Its subcellular location is the cytoplasmic vesicle. The protein localises to the COPI-coated vesicle membrane. Its function is as follows. The coatomer is a cytosolic protein complex that binds to dilysine motifs and reversibly associates with Golgi non-clathrin-coated vesicles, which further mediate biosynthetic protein transport from the ER, via the Golgi up to the trans Golgi network. Coatomer complex is required for budding from Golgi membranes, and is essential for the retrograde Golgi-to-ER transport of dilysine-tagged proteins. The polypeptide is Coatomer subunit beta (copb) (Dictyostelium discoideum (Social amoeba)).